The chain runs to 127 residues: Modulator protein MzrA (127 aa).

The Cytoplasmic segment spans residues 1 to 10; that stretch reads MQIPRMSLRQ. The helical transmembrane segment at 11-31 threads the bilayer; the sequence is LAWSGAVLLLVGTLLLAWSAV. Over 32–127 the chain is Periplasmic; it reads RQQESTLAIR…RLRDNSHRFG (96 aa).

It belongs to the MzrA family. In terms of assembly, interacts with EnvZ.

It localises to the cell inner membrane. In terms of biological role, modulates the activity of the EnvZ/OmpR two-component regulatory system, probably by directly modulating EnvZ enzymatic activity and increasing stability of phosphorylated OmpR. Links the two-component systems CpxA/CpxR and EnvZ/OmpR. The polypeptide is Modulator protein MzrA (Escherichia coli (strain K12)).